Consider the following 347-residue polypeptide: Eukaryotic translation initiation factor 3 subunit H (347 aa).

An MPN domain is found at 1-142 (MKIMKHCSQT…LRAFRLSPRF (142 aa)).

It belongs to the eIF-3 subunit H family. In terms of assembly, component of the eukaryotic translation initiation factor 3 (eIF-3) complex.

It localises to the cytoplasm. Functionally, component of the eukaryotic translation initiation factor 3 (eIF-3) complex, which is involved in protein synthesis of a specialized repertoire of mRNAs and, together with other initiation factors, stimulates binding of mRNA and methionyl-tRNAi to the 40S ribosome. The eIF-3 complex specifically targets and initiates translation of a subset of mRNAs involved in cell proliferation. The sequence is that of Eukaryotic translation initiation factor 3 subunit H from Neosartorya fischeri (strain ATCC 1020 / DSM 3700 / CBS 544.65 / FGSC A1164 / JCM 1740 / NRRL 181 / WB 181) (Aspergillus fischerianus).